The primary structure comprises 236 residues: uncharacterized protein (236 aa).

The first 26 residues, 1–26 (MTNTWNRLALLIFAVLSLLVAGELQA), serve as a signal peptide directing secretion.

It belongs to the periplasmic pilus chaperone family.

The protein resides in the periplasm. Part of the elfADCG-ycbUVF fimbrial operon, which promotes adhesion of bacteria to different abiotic surfaces. Could be required for the biogenesis of fimbriae. This is an uncharacterized protein from Escherichia coli (strain K12).